The primary structure comprises 207 residues: Large ribosomal subunit protein uL4 (207 aa).

Residues 49–78 (HAVKNRSAVRGGGRKPWRQKGTGRARQGSI) form a disordered region. Over residues 60–71 (GGRKPWRQKGTG) the composition is skewed to basic residues.

The protein belongs to the universal ribosomal protein uL4 family. In terms of assembly, part of the 50S ribosomal subunit.

Functionally, one of the primary rRNA binding proteins, this protein initially binds near the 5'-end of the 23S rRNA. It is important during the early stages of 50S assembly. It makes multiple contacts with different domains of the 23S rRNA in the assembled 50S subunit and ribosome. Forms part of the polypeptide exit tunnel. This is Large ribosomal subunit protein uL4 from Enterococcus faecalis (strain ATCC 700802 / V583).